The sequence spans 490 residues: Flap endonuclease 1 (490 aa).

The N-domain stretch occupies residues 1-106 (MGIKGLTKFL…DELTKRDERR (106 aa)). D34 is a Mg(2+) binding site. R47 and R72 together coordinate DNA. The Mg(2+) site is built by D88, E160, E162, D181, and D183. Residues 124 to 266 (LIKKQSVRTI…STAYKLLKKY (143 aa)) are I-domain. E160 lines the DNA pocket. G244 and D246 together coordinate DNA. A Mg(2+)-binding site is contributed by D246. The segment at 351 to 359 (SQTCLDGFF) is interaction with PCNA. Disordered regions lie at residues 364–396 (NERK…SLSC) and 421–490 (SSQA…SDED). Residues 430 to 442 (ENSSEAPNQSSEI) show a composition bias toward polar residues. The span at 443–454 (KVNKIEENKDSE) shows a compositional bias: basic and acidic residues. The segment covering 455–469 (SSTVENTPSLQTKSP) has biased composition (polar residues).

This sequence belongs to the XPG/RAD2 endonuclease family. FEN1 subfamily. In terms of assembly, interacts with PCNA. Three molecules of FEN1 bind to one PCNA trimer with each molecule binding to one PCNA monomer. PCNA stimulates the nuclease activity without altering cleavage specificity. It depends on Mg(2+) as a cofactor. In terms of processing, phosphorylated. Phosphorylation upon DNA damage induces relocalization to the nuclear plasma.

Its subcellular location is the nucleus. It is found in the nucleolus. It localises to the nucleoplasm. The protein resides in the mitochondrion. Functionally, structure-specific nuclease with 5'-flap endonuclease and 5'-3' exonuclease activities involved in DNA replication and repair. During DNA replication, cleaves the 5'-overhanging flap structure that is generated by displacement synthesis when DNA polymerase encounters the 5'-end of a downstream Okazaki fragment. It enters the flap from the 5'-end and then tracks to cleave the flap base, leaving a nick for ligation. Also involved in the long patch base excision repair (LP-BER) pathway, by cleaving within the apurinic/apyrimidinic (AP) site-terminated flap. Acts as a genome stabilization factor that prevents flaps from equilibrating into structures that lead to duplications and deletions. Also possesses 5'-3' exonuclease activity on nicked or gapped double-stranded DNA, and exhibits RNase H activity. Also involved in replication and repair of rDNA and in repairing mitochondrial DNA. The protein is Flap endonuclease 1 of Cryptosporidium parvum (strain Iowa II).